Consider the following 432-residue polypeptide: Teosinte glume architecture 1 (432 aa).

Disordered stretches follow at residues 20–55 and 68–102; these read HAAAAPSSGGHAANAAAAGTGTESRPPAPGAAGAPA and ECEPGAARREREAAAGAAKRPRPAGPGGQQQQQQC. The span at 22-41 shows a compositional bias: low complexity; it reads AAAPSSGGHAANAAAAGTGT. The SBP-type zinc finger occupies 102-179; the sequence is CPSCAVDGCR…DGHNRRRRKP (78 aa). Residues cysteine 105, cysteine 110, cysteine 127, histidine 130, cysteine 146, cysteine 149, histidine 153, and cysteine 165 each contribute to the Zn(2+) site. Residues 409-420 are compositionally biased toward gly residues; sequence GGGSGGGEGSSD. Residues 409–432 form a disordered region; the sequence is GGGSGGGEGSSDGGTSSSMPFSWQ.

In terms of assembly, monomer and homodimer. As to expression, strongly expressed in immature ears and weakly in husks. Found in the inflorescence meristem of the developing ear, in the spikelet pair primordia, the glume primordia, the cupule forming region and other floral organs. Not detected in other tissues.

In terms of biological role, SBP transcriptional regulator probably involved in the domestication of maize. Acts as a transcriptional repressor binding to a 5'-GTAC-3' motif. May repress the growth of lateral branches in length and numbers. The protein is Teosinte glume architecture 1 of Zea mays (Maize).